We begin with the raw amino-acid sequence, 448 residues long: Death-associated protein kinase 3 (448 aa).

Residues tyrosine 13 to isoleucine 275 form the Protein kinase domain. ATP is bound by residues leucine 19–valine 27 and lysine 42. Aspartate 139 serves as the catalytic Proton acceptor. An activation segment region spans residues aspartate 161–glycine 204. Threonine 180 and threonine 225 each carry phosphothreonine. Threonine 265 carries the phosphothreonine; by autocatalysis modification. Threonine 265 is subject to Phosphothreonine; by ROCK1. Serine 304 is subject to Phosphoserine; by DAPK1. The residue at position 306 (serine 306) is a Phosphoserine; by autocatalysis and DAPK1. A phosphoserine; by DAPK1 mark is found at serine 307, serine 313, and serine 321. The interval alanine 390–arginine 448 is interaction with CDC5L. A leucine-zipper region spans residues valine 422 to leucine 436.

This sequence belongs to the protein kinase superfamily. CAMK Ser/Thr protein kinase family. DAP kinase subfamily. As to quaternary structure, homooligomer in its kinase-active form (homotrimers and homodimers are reported); monomeric in its kinase-inactive form. Homodimerization is required for activation segment autophosphorylation. Interacts with DAXX, PAWR, ATF4, NLK, TCF7L2, UBE2D1, UBE2D2, UBE2D3, and CDC5L. Interacts with AR; enhanced by AATF. Interacts with LUZP1; the interaction is likely to occur throughout the cell cycle and reduces the LUZP1-mediated suppression of MYL9 phosphorylation. Requires Mg(2+) as cofactor. Post-translationally, ubiquitinated. Ubiquitination mediated by the UBE2D3 E3 ligase does not lead to proteasomal degradation, but influences promyelocytic leukemia protein nuclear bodies (PML-NBs) formation in the nucleus. The phosphorylation status is critical for kinase activity, oligomerization and intracellular localization. Phosphorylation at Thr-180, Thr-225 and Thr-265 is essential for activity. The phosphorylated form is localized in the cytoplasm and nuclear translocation or retention is maximal when it is not phosphorylated. Phosphorylation increases the trimeric form, and its dephosphorylation favors a kinase-inactive monomeric form. As to expression, highly expressed in heart, brain, lung, skeletal muscle, kidney and testis. Lower levels in liver and spleen.

It is found in the nucleus. It localises to the PML body. The protein localises to the cytoplasm. The protein resides in the cytoskeleton. Its subcellular location is the microtubule organizing center. It is found in the centrosome. It localises to the chromosome. The protein localises to the centromere. The protein resides in the spindle. Its subcellular location is the midbody. It catalyses the reaction L-seryl-[protein] + ATP = O-phospho-L-seryl-[protein] + ADP + H(+). It carries out the reaction L-threonyl-[protein] + ATP = O-phospho-L-threonyl-[protein] + ADP + H(+). Its activity is regulated as follows. A sequential activation is proposed: autophosphorylation at consensus sites is leading to dimerization of the catalytic domain and activation segment exchange (producing an active confirmation of both kinase modules in trans) followed by phosphorylation at Thr-180 in the activation segment and at other regulatory sites. Phosphorylation at Thr-180, Thr-225 and Thr-265 is essential for activity. Inhibited by pyridone 6 (K00225), a potent, ATP-competitive inhibitor. Phosphorylation at Thr-180, Thr-225 and Thr-265 is essential for activity. Its function is as follows. Serine/threonine kinase which is involved in the regulation of apoptosis, autophagy, transcription, translation and actin cytoskeleton reorganization. Regulates both type I (caspase-dependent) apoptotic and type II (caspase-independent) autophagic cell deaths signal, depending on the cellular setting. Involved in formation of promyelocytic leukemia protein nuclear body (PML-NB). Involved in apoptosis involving PAWR which mediates cytoplasmic relocation; in vitro phosphorylates PAWR. Regulates myosin phosphorylation in both smooth muscle and non-muscle cells. In smooth muscle, regulates myosin either directly by phosphorylating MYL12B and MYL9 or through inhibition of smooth muscle myosin phosphatase (SMPP1M) via phosphorylation of PPP1R12A; the inhibition of SMPP1M functions to enhance muscle responsiveness to Ca(2+) and promote a contractile state. Phosphorylates MYL12B in non-muscle cells leading to reorganization of actin cytoskeleton such as in regulation of cell polarity and cell migration. Positively regulates canonical Wnt/beta-catenin signaling through interaction with NLK and TCF7L2; disrupts the NLK-TCF7L2 complex thereby influencing the phosphorylation of TCF7L2 by NLK. Phosphorylates STAT3 and enhances its transcriptional activity. Enhances transcription from AR-responsive promoters in a hormone- and kinase-dependent manner. Phosphorylates histone H3 on 'Thr-11' at centromeres during mitosis. Phosphorylates RPL13A on 'Ser-77' upon interferon-gamma activation which is causing RPL13A release from the ribosome, RPL13A association with the GAIT complex and its subsequent involvement in transcript-selective translation inhibition. This chain is Death-associated protein kinase 3 (Dapk3), found in Mus musculus (Mouse).